The primary structure comprises 90 residues: Probable Fe(2+)-trafficking protein (90 aa).

It belongs to the Fe(2+)-trafficking protein family.

Functionally, could be a mediator in iron transactions between iron acquisition and iron-requiring processes, such as synthesis and/or repair of Fe-S clusters in biosynthetic enzymes. This Pseudomonas syringae pv. tomato (strain ATCC BAA-871 / DC3000) protein is Probable Fe(2+)-trafficking protein.